Reading from the N-terminus, the 993-residue chain is Type II inositol 1,4,5-trisphosphate 5-phosphatase (993 aa).

In terms of domain architecture, PH spans 22-148 (QGVLCKGDSR…PEFEWLSRHT (127 aa)). Composition is skewed to basic and acidic residues over residues 149–163 (CAEP…REWN) and 294–303 (SKSDMSEKVR). Disordered regions lie at residues 149 to 191 (CAEP…GLED) and 236 to 304 (EALE…KVRS). Residues 342 to 668 (IQNFRFFVGT…LDKMENANIP (327 aa)) are 5-phosphatase. N355 and E383 together coordinate Mg(2+). Substrate is bound by residues E383, 459–460 (NK), 582–583 (YK), and 596–598 (KCR). Residues 669 to 782 (SVTLSKREFC…LSVSGNYLPS (114 aa)) are ASH. Residues 821–993 (SQLENPMEIP…FIHQFLCGPL (173 aa)) form the Rho-GAP domain. The residue at position 990 (C990) is a Cysteine methyl ester. C990 is lipidated: S-farnesyl cysteine. Residues 991–993 (GPL) constitute a propeptide, removed in mature form.

It belongs to the inositol 1,4,5-trisphosphate 5-phosphatase type II family. As to quaternary structure, interacts with APPL1, PHETA1 and PHETA2. Interacts with several Rab GTPases, at least RAB1A, RAB2A, RAB5A, RAB6A, RAB8A, RAB9A and RAB33B; these interactions may play a dual role in targeting INPP5B to the specific membranes and stimulating its phosphatase activity. Interacts preferentially with non-phosphorylated RAB8A; phosphorylation of RAB8A on 'Thr-72' disrupts this interaction. Interacts with INPP5F. Post-translationally, isoprenylation at Cys-990 may be required for localization at the membrane. May be proteolytically cleaved after Lys-320 as inferred from N-terminal protein sequence of the 75 kda form. As to expression, detected in kidney, liver, brain, lung and testis (at protein level). Detected in kidney and liver, and at lower levels in brain, lung and testis.

The protein localises to the cytoplasm. The protein resides in the cytosol. Its subcellular location is the endoplasmic reticulum-Golgi intermediate compartment. It localises to the early endosome membrane. It is found in the membrane. The protein localises to the cytoplasmic vesicle. The protein resides in the phagosome membrane. It carries out the reaction a 1,2-diacyl-sn-glycero-3-phospho-(1D-myo-inositol-4,5-bisphosphate) + H2O = a 1,2-diacyl-sn-glycero-3-phospho-(1D-myo-inositol 4-phosphate) + phosphate. Hydrolyzes phosphatidylinositol 4,5-bisphosphate (PtIns(4,5)P2) and the signaling molecule phosphatidylinositol 1,4,5-trisphosphate (PtIns(1,4,5)P3), and thereby modulates cellular signaling events. The polypeptide is Type II inositol 1,4,5-trisphosphate 5-phosphatase (Inpp5b) (Mus musculus (Mouse)).